The following is a 452-amino-acid chain: Bifunctional protein GlmU (452 aa).

Residues 1–232 form a pyrophosphorylase region; sequence MTTNAPGAVI…EADMQGVNSR (232 aa). UDP-N-acetyl-alpha-D-glucosamine is bound by residues 11–14, K25, Q78, and 83–84; these read LAAG and GT. A Mg(2+)-binding site is contributed by D108. Residues G144, E158, and N230 each coordinate UDP-N-acetyl-alpha-D-glucosamine. N230 serves as a coordination point for Mg(2+). The interval 233–253 is linker; the sequence is ADLAAAEATMQQRLRMAAMAG. The tract at residues 254–452 is N-acetyltransferase; that stretch reads GVTMLDPSSV…HKDKKKASGE (199 aa). Positions 319 and 337 each coordinate UDP-N-acetyl-alpha-D-glucosamine. H349 (proton acceptor) is an active-site residue. Positions 352 and 363 each coordinate UDP-N-acetyl-alpha-D-glucosamine. Residues A366, 372-373, S391, S409, and R426 contribute to the acetyl-CoA site; that span reads NY.

In the N-terminal section; belongs to the N-acetylglucosamine-1-phosphate uridyltransferase family. It in the C-terminal section; belongs to the transferase hexapeptide repeat family. As to quaternary structure, homotrimer. Requires Mg(2+) as cofactor.

Its subcellular location is the cytoplasm. The catalysed reaction is alpha-D-glucosamine 1-phosphate + acetyl-CoA = N-acetyl-alpha-D-glucosamine 1-phosphate + CoA + H(+). It carries out the reaction N-acetyl-alpha-D-glucosamine 1-phosphate + UTP + H(+) = UDP-N-acetyl-alpha-D-glucosamine + diphosphate. It functions in the pathway nucleotide-sugar biosynthesis; UDP-N-acetyl-alpha-D-glucosamine biosynthesis; N-acetyl-alpha-D-glucosamine 1-phosphate from alpha-D-glucosamine 6-phosphate (route II): step 2/2. The protein operates within nucleotide-sugar biosynthesis; UDP-N-acetyl-alpha-D-glucosamine biosynthesis; UDP-N-acetyl-alpha-D-glucosamine from N-acetyl-alpha-D-glucosamine 1-phosphate: step 1/1. Its pathway is bacterial outer membrane biogenesis; LPS lipid A biosynthesis. Its function is as follows. Catalyzes the last two sequential reactions in the de novo biosynthetic pathway for UDP-N-acetylglucosamine (UDP-GlcNAc). The C-terminal domain catalyzes the transfer of acetyl group from acetyl coenzyme A to glucosamine-1-phosphate (GlcN-1-P) to produce N-acetylglucosamine-1-phosphate (GlcNAc-1-P), which is converted into UDP-GlcNAc by the transfer of uridine 5-monophosphate (from uridine 5-triphosphate), a reaction catalyzed by the N-terminal domain. In Parvibaculum lavamentivorans (strain DS-1 / DSM 13023 / NCIMB 13966), this protein is Bifunctional protein GlmU.